A 159-amino-acid chain; its full sequence is Phosphopantetheine adenylyltransferase (159 aa).

Substrate is bound at residue Thr-10. ATP-binding positions include 10 to 11 (TF) and His-18. Substrate is bound by residues Lys-42, Met-74, and Arg-88. ATP-binding positions include 89–91 (GLR), Glu-99, and 124–130 (WSFISSS).

Belongs to the bacterial CoaD family. Homohexamer. Mg(2+) serves as cofactor.

Its subcellular location is the cytoplasm. The enzyme catalyses (R)-4'-phosphopantetheine + ATP + H(+) = 3'-dephospho-CoA + diphosphate. The protein operates within cofactor biosynthesis; coenzyme A biosynthesis; CoA from (R)-pantothenate: step 4/5. In terms of biological role, reversibly transfers an adenylyl group from ATP to 4'-phosphopantetheine, yielding dephospho-CoA (dPCoA) and pyrophosphate. The sequence is that of Phosphopantetheine adenylyltransferase from Yersinia pseudotuberculosis serotype O:3 (strain YPIII).